The following is a 100-amino-acid chain: NADH-quinone oxidoreductase subunit K (100 aa).

The next 3 helical transmembrane spans lie at 4–24 (LSHA…AIIV), 29–49 (LFIL…FVIV), and 60–80 (IMYI…LALL).

The protein belongs to the complex I subunit 4L family. NDH-1 is composed of 13 different subunits. Subunits NuoA, H, J, K, L, M, N constitute the membrane sector of the complex.

The protein localises to the cell inner membrane. The enzyme catalyses a quinone + NADH + 5 H(+)(in) = a quinol + NAD(+) + 4 H(+)(out). In terms of biological role, NDH-1 shuttles electrons from NADH, via FMN and iron-sulfur (Fe-S) centers, to quinones in the respiratory chain. The immediate electron acceptor for the enzyme in this species is believed to be ubiquinone. Couples the redox reaction to proton translocation (for every two electrons transferred, four hydrogen ions are translocated across the cytoplasmic membrane), and thus conserves the redox energy in a proton gradient. This Blochmanniella pennsylvanica (strain BPEN) protein is NADH-quinone oxidoreductase subunit K.